The sequence spans 204 residues: Thiamine-phosphate synthase (204 aa).

4-amino-2-methyl-5-(diphosphooxymethyl)pyrimidine contacts are provided by residues 34 to 38 (QYRDK) and Asp-66. Positions 67 and 86 each coordinate Mg(2+). Position 104 (Ser-104) interacts with 4-amino-2-methyl-5-(diphosphooxymethyl)pyrimidine. 131 to 133 (TST) serves as a coordination point for 2-[(2R,5Z)-2-carboxy-4-methylthiazol-5(2H)-ylidene]ethyl phosphate. Lys-134 is a binding site for 4-amino-2-methyl-5-(diphosphooxymethyl)pyrimidine. 2-[(2R,5Z)-2-carboxy-4-methylthiazol-5(2H)-ylidene]ethyl phosphate-binding positions include Gly-160 and 180–181 (VS).

The protein belongs to the thiamine-phosphate synthase family. Mg(2+) is required as a cofactor.

It carries out the reaction 2-[(2R,5Z)-2-carboxy-4-methylthiazol-5(2H)-ylidene]ethyl phosphate + 4-amino-2-methyl-5-(diphosphooxymethyl)pyrimidine + 2 H(+) = thiamine phosphate + CO2 + diphosphate. The enzyme catalyses 2-(2-carboxy-4-methylthiazol-5-yl)ethyl phosphate + 4-amino-2-methyl-5-(diphosphooxymethyl)pyrimidine + 2 H(+) = thiamine phosphate + CO2 + diphosphate. The catalysed reaction is 4-methyl-5-(2-phosphooxyethyl)-thiazole + 4-amino-2-methyl-5-(diphosphooxymethyl)pyrimidine + H(+) = thiamine phosphate + diphosphate. It functions in the pathway cofactor biosynthesis; thiamine diphosphate biosynthesis; thiamine phosphate from 4-amino-2-methyl-5-diphosphomethylpyrimidine and 4-methyl-5-(2-phosphoethyl)-thiazole: step 1/1. In terms of biological role, condenses 4-methyl-5-(beta-hydroxyethyl)thiazole monophosphate (THZ-P) and 2-methyl-4-amino-5-hydroxymethyl pyrimidine pyrophosphate (HMP-PP) to form thiamine monophosphate (TMP). The sequence is that of Thiamine-phosphate synthase from Picrophilus torridus (strain ATCC 700027 / DSM 9790 / JCM 10055 / NBRC 100828 / KAW 2/3).